A 266-amino-acid chain; its full sequence is Protein SCO2 homolog, mitochondrial (266 aa).

The transit peptide at 1-41 (MLLLTRSPTAWHRLSQLKPRVLPGTLGGQALHLRSWLLSRQ) directs the protein to the mitochondrion. The Mitochondrial matrix portion of the chain corresponds to 42 to 60 (GPAETGGQGQPQGPGLRTR). Residues 61–78 (LLITGLFGAGLGGAWLAL) form a helical membrane-spanning segment. The Mitochondrial intermembrane segment spans residues 79–266 (RAEKERLQQQ…HMAAFRSVLS (188 aa)). In terms of domain architecture, Thioredoxin spans 85–259 (LQQQKRTEAL…ISDSVRRHMA (175 aa)). 3 residues coordinate Cu cation: Cys-133, Cys-137, and His-224. Cysteines 133 and 137 form a disulfide.

Belongs to the SCO1/2 family. Homodimer. Interacts with COA6. Found in a complex with TMEM177, COX20, COA6, MT-CO2/COX2, COX18 and SCO1. Interacts with TMEM177 in a COX20-dependent manner. Interacts with COX20 in a MT-CO2/COX2- and COX18-dependent manner. Interacts with COX16. In terms of tissue distribution, ubiquitous.

The protein localises to the mitochondrion inner membrane. In terms of biological role, copper metallochaperone essential for the synthesis and maturation of cytochrome c oxidase subunit II (MT-CO2/COX2) by facilitating the incorporation of copper into the Cu(A) site of MT-CO2/COX2. Could also act as a thiol-disulfide oxidoreductase to regulate the redox state of the cysteines in SCO1 during maturation of MT-CO2/COX2. This chain is Protein SCO2 homolog, mitochondrial (SCO2), found in Homo sapiens (Human).